Here is a 340-residue protein sequence, read N- to C-terminus: Cobalt-precorrin-5B C(1)-methyltransferase (340 aa).

Belongs to the CbiD family.

The enzyme catalyses Co-precorrin-5B + S-adenosyl-L-methionine = Co-precorrin-6A + S-adenosyl-L-homocysteine. It participates in cofactor biosynthesis; adenosylcobalamin biosynthesis; cob(II)yrinate a,c-diamide from sirohydrochlorin (anaerobic route): step 6/10. In terms of biological role, catalyzes the methylation of C-1 in cobalt-precorrin-5B to form cobalt-precorrin-6A. The protein is Cobalt-precorrin-5B C(1)-methyltransferase of Pyrobaculum aerophilum (strain ATCC 51768 / DSM 7523 / JCM 9630 / CIP 104966 / NBRC 100827 / IM2).